The primary structure comprises 192 residues: Cytochrome c oxidase assembly protein CtaG (192 aa).

The Cytoplasmic segment spans residues 1-9 (MSLSPHQKT). A helical; Signal-anchor for type II membrane protein membrane pass occupies residues 10-30 (AGWLVGVVVVMGAASFAAVPF). The Periplasmic segment spans residues 31–192 (YDWFCRVTGF…AARPAGIDVN (162 aa)).

Belongs to the COX11/CtaG family.

The protein resides in the cell inner membrane. Functionally, exerts its effect at some terminal stage of cytochrome c oxidase synthesis, probably by being involved in the insertion of the copper B into subunit I. This Cereibacter sphaeroides (strain ATCC 17025 / ATH 2.4.3) (Rhodobacter sphaeroides) protein is Cytochrome c oxidase assembly protein CtaG.